A 677-amino-acid chain; its full sequence is Mitochondrial disaggregase (677 aa).

The N-terminal 57 residues, 1–57 (MMLSAVLRRTAPAPRLFLGLIKSPSLQSRGGAYNRSVITGDRGEPQRLRTAAWVRPG), are a transit peptide targeting the mitochondrion. Residues 64–103 (PGRGAATGGRRGERTEIPYLTAASSGRGPSPEETLPGQDS) form a disordered region. Residues 92 to 126 (PSPEETLPGQDSWNGVPNKAGLGMWALAMALVVQC) are autoinhibitory. 4 ANK repeats span residues 133–162 (NKDA…DVNA), 166–195 (LGWT…DPNL), 235–265 (KGCT…PLQR), and 268–297 (MGHT…EKQR). His-316, Ile-318, Ser-353, Gly-354, Ile-355, Gly-356, Lys-357, Thr-358, Glu-425, and Asn-466 together coordinate ATP. The regulatory; slows ATPase and disaggregase activities stretch occupies residues 477–505 (LQLRQEALEMSRNRIAENLGDVQISDKIT). Residue Arg-531 participates in ATP binding. Residue Lys-559 is modified to N6-acetyllysine. ATP is bound at residue Arg-590.

The protein belongs to the ClpA/ClpB family. Homododecamer when substrate-bound; the homododecamer consists of 2 homohexamers stacked head-to-head via ANK repeat-mediated interactions. The active substrate-bound form is likely to exist in a dynamic equilibrium between homohexamers and homododecamers. Homotetradecamer in the unbound state which is remodeled upon substrate binding into the homododecamer. Interacts with PHB and PHB2. Interacts with MAVS; the interaction is enhanced by Sendai virus infection. In terms of processing, proteolytically cleaved by protease PARL. ATP-dependent protein disaggregase activity is stimulated by PARL-mediated cleavage of the N-terminal autoinhibitory peptide.

Its subcellular location is the mitochondrion intermembrane space. The catalysed reaction is ATP + H2O = ADP + phosphate + H(+). Disaggregase activity is inhibited by ADP. Functionally, functions as a regulatory ATPase and participates in secretion/protein trafficking process. Has ATP-dependent protein disaggregase activity and is required to maintain the solubility of key mitochondrial proteins. Involved in mitochondrial-mediated antiviral innate immunity, activates RIG-I-mediated signal transduction and production of IFNB1 and pro-inflammatory cytokine IL6. Plays a role in granulocyte differentiation. The chain is Mitochondrial disaggregase from Rattus norvegicus (Rat).